The sequence spans 290 residues: uncharacterized protein (290 aa).

The protein resides in the cytoplasm. This is an uncharacterized protein from Saccharomyces cerevisiae (strain ATCC 204508 / S288c) (Baker's yeast).